The sequence spans 113 residues: U11-theraphotoxin-Hhn1o (113 aa).

Residues 1-21 (MNTVRVTFLLVFVLAVSLGQA) form the signal peptide. The propeptide occupies 22–74 (DKDENRMEMQEKTEQGKSYLDFAENLLLQKLEELEAKLLEEDSEESRNSRQKR). The tract at residues 61–83 (EEDSEESRNSRQKRCIGEGVPCD) is disordered. 2 disulfides stabilise this stretch: C75–C90 and C82–C95.

This sequence belongs to the neurotoxin 14 (magi-1) family. 01 (HNTX-16) subfamily. Expressed by the venom gland.

Its subcellular location is the secreted. Probable ion channel inhibitor. The protein is U11-theraphotoxin-Hhn1o of Cyriopagopus hainanus (Chinese bird spider).